Here is a 292-residue protein sequence, read N- to C-terminus: Ribosomal protein L11 methyltransferase (292 aa).

S-adenosyl-L-methionine contacts are provided by threonine 136, glycine 159, aspartate 181, and asparagine 228.

This sequence belongs to the methyltransferase superfamily. PrmA family.

The protein resides in the cytoplasm. It carries out the reaction L-lysyl-[protein] + 3 S-adenosyl-L-methionine = N(6),N(6),N(6)-trimethyl-L-lysyl-[protein] + 3 S-adenosyl-L-homocysteine + 3 H(+). Its function is as follows. Methylates ribosomal protein L11. In Rhizobium etli (strain ATCC 51251 / DSM 11541 / JCM 21823 / NBRC 15573 / CFN 42), this protein is Ribosomal protein L11 methyltransferase.